Here is a 314-residue protein sequence, read N- to C-terminus: MIOREX complex component 8 (314 aa).

In terms of domain architecture, EngB-type G spans 132–312; that stretch reads TLPEVIFLGG…RYVIFQSCGL (181 aa). Residues 140–147, 173–177, 191–194, 253–256, and 290–292 each bind GTP; these read GGTNVGKS, GFTKT, DSPG, TKMD, and SST. Residues S147 and T175 each coordinate Mg(2+).

The protein belongs to the TRAFAC class TrmE-Era-EngA-EngB-Septin-like GTPase superfamily. EngB GTPase family. Associates with the mitochondrial ribosome. Mg(2+) serves as cofactor. Sumoylated upon ethanol stress.

It is found in the mitochondrion. Functionally, component of MIOREX complexes, large expressome-like assemblies of ribosomes with factors involved in all the steps of post-transcriptional gene expression. In Saccharomyces cerevisiae (strain ATCC 204508 / S288c) (Baker's yeast), this protein is MIOREX complex component 8.